A 332-amino-acid chain; its full sequence is Ubiquinone biosynthesis protein COQ4, mitochondrial (332 aa).

Residues 1–16 (MFTVSKKSLQASRNAF) constitute a mitochondrion transit peptide. 4 residues coordinate Zn(2+): His-212, Asp-213, His-216, and Glu-228.

Belongs to the COQ4 family. In terms of assembly, component of a multi-subunit COQ enzyme complex, composed of at least COQ3, COQ4, COQ5, COQ6, COQ7 and COQ9. Zn(2+) serves as cofactor.

The protein localises to the mitochondrion inner membrane. The catalysed reaction is a 4-hydroxy-3-methoxy-5-(all-trans-polyprenyl)benzoate + H(+) = a 2-methoxy-6-(all-trans-polyprenyl)phenol + CO2. It participates in cofactor biosynthesis; ubiquinone biosynthesis. In terms of biological role, lyase that catalyzes the C1-decarboxylation of 4-hydroxy-3-methoxy-5-(all-trans-polyprenyl)benzoic acid into 2-methoxy-6-(all-trans-polyprenyl)phenol during ubiquinone biosynthesis. In Kluyveromyces lactis (strain ATCC 8585 / CBS 2359 / DSM 70799 / NBRC 1267 / NRRL Y-1140 / WM37) (Yeast), this protein is Ubiquinone biosynthesis protein COQ4, mitochondrial.